The chain runs to 444 residues: Tol-Pal system protein TolB (444 aa).

The first 19 residues, 1 to 19 (MRNIIYFILLLLFSFKGYA), serve as a signal peptide directing secretion.

Belongs to the TolB family. As to quaternary structure, the Tol-Pal system is composed of five core proteins: the inner membrane proteins TolA, TolQ and TolR, the periplasmic protein TolB and the outer membrane protein Pal. They form a network linking the inner and outer membranes and the peptidoglycan layer.

The protein localises to the periplasm. In terms of biological role, part of the Tol-Pal system, which plays a role in outer membrane invagination during cell division and is important for maintaining outer membrane integrity. This Rickettsia akari (strain Hartford) protein is Tol-Pal system protein TolB.